The following is a 115-amino-acid chain: Transcription and mRNA export factor ENY2 (115 aa).

The protein belongs to the ENY2 family. As to quaternary structure, component of a deubiquitination module (DUB module) formed by ENY2, SGF11, and UBP22 in Arabidopsis. Interacts directly with SGF11, but not with UBP22. Interacts with MOS4. Expressed in roots, cotyledons, leaves and upper part of sepals.

The protein localises to the nucleus. It localises to the nucleoplasm. Its function is as follows. Component of a deubiquitination module (DUB module) that specifically deubiquinates monoubiquinated histone H2B (H2Bub). Does not seem to be a component of the TREX-2 complex. Seems to act independently of the SAGA multiprotein complex. The DUB module is responsible for the major H2Bub deubiquitinase activity in Arabidopsis. In Arabidopsis thaliana (Mouse-ear cress), this protein is Transcription and mRNA export factor ENY2.